Reading from the N-terminus, the 395-residue chain is Chalcone synthase (395 aa).

Residue valine 2 is modified to N-acetylvaline. Residue valine 2 is modified to N-acetylalanine. Cysteine 169 is an active-site residue.

This sequence belongs to the thiolase-like superfamily. Chalcone/stilbene synthases family.

It carries out the reaction (E)-4-coumaroyl-CoA + 3 malonyl-CoA + 3 H(+) = 2',4,4',6'-tetrahydroxychalcone + 3 CO2 + 4 CoA. It functions in the pathway secondary metabolite biosynthesis; flavonoid biosynthesis. In terms of biological role, the primary product of this enzyme is 4,2',4',6'-tetrahydroxychalcone (also termed naringenin-chalcone or chalcone) which can under specific conditions spontaneously isomerize into naringenin. The protein is Chalcone synthase (CHS) of Arabidopsis thaliana (Mouse-ear cress).